We begin with the raw amino-acid sequence, 168 residues long: Sensor histidine kinase component HK1 (168 aa).

The 141-residue stretch at 1–141 (MPITPLLHES…ELRITLPTPR (141 aa)) folds into the Histidine kinase; second part domain. Residues 137 to 168 (LPTPRPPFHEELPRITSSDTKDPNREHDTSDQ) are disordered. Residues 143-168 (PFHEELPRITSSDTKDPNREHDTSDQ) are compositionally biased toward basic and acidic residues.

In terms of assembly, interacts with HK2.

It carries out the reaction ATP + protein L-histidine = ADP + protein N-phospho-L-histidine.. Member of the three-protein two-component system HK1/HK2/TcrA. Kinase that binds ATP and catalyzes the transfer of a phosphoryl group from ATP to HK2. The chain is Sensor histidine kinase component HK1 from Mycobacterium tuberculosis (strain ATCC 25618 / H37Rv).